A 435-amino-acid chain; its full sequence is MTLDLAAFARDKSIKYFMISYTDLFGGQRAKLVPAEAIADMQKDGAGFAGFATWLDLTPAHPDLFAVPDASSVIQLPWKKDVAWVAADCVMDDRPVEQAPRVVLKRLVAEAAKEGLRVKTGVEPEFFLISADGSVISDQFDTAEKPCYDQQAVMRRYDVIAEICDYMLELGWKPYQNDHEDANGQFEMNWEYDDVLKTADKHSFFKFMVKSVAEKHGLRATFMPKPFKGLTGNGCHAHISVWDVDGRVNAFADKEMAFGLSAQGKTFLGGIMKHAPALAAITNPTVNSYKRINAPRTTSGATWSPNTVTWTGNNRTHMVRVPGPGRFELRLPDGAVNPYLLQAIIIAAGLEGIRSQADPGQHYDIDMYAEGHLVKDAPRLPLNLLDALRAFDADEGLKAAIGAEFSSAYLKLKHLEWNAYCSHFTQWERDSTLDI.

The GS beta-grasp domain maps to 12 to 94 (KSIKYFMISY…VAADCVMDDR (83 aa)). In terms of domain architecture, GS catalytic spans 100–435 (PRVVLKRLVA…QWERDSTLDI (336 aa)). Mg(2+) contacts are provided by Glu123, Glu125, Glu180, and Glu187. Residue Gly232 participates in L-glutamate binding. His236 is a binding site for Mg(2+). An ATP-binding site is contributed by Ser240. Residues Arg291 and Arg315 each contribute to the L-glutamate site. Residues Arg315 and Arg320 each coordinate ATP. Residue Glu328 coordinates Mg(2+). Arg330 lines the L-glutamate pocket.

The protein belongs to the glutamine synthetase family. Homooctamer. The cofactor is Mg(2+).

The catalysed reaction is L-glutamate + NH4(+) + ATP = L-glutamine + ADP + phosphate + H(+). Functionally, catalyzes the ATP-dependent biosynthesis of glutamine from glutamate and ammonia. The polypeptide is Glutamine synthetase (Rhizobium leguminosarum bv. phaseoli).